Reading from the N-terminus, the 555-residue chain is Arginine--tRNA ligase (555 aa).

Positions 117–127 match the 'HIGH' region motif; the sequence is ANPNGPLHVGH.

This sequence belongs to the class-I aminoacyl-tRNA synthetase family.

It localises to the cytoplasm. The enzyme catalyses tRNA(Arg) + L-arginine + ATP = L-arginyl-tRNA(Arg) + AMP + diphosphate. The polypeptide is Arginine--tRNA ligase (Methanospirillum hungatei JF-1 (strain ATCC 27890 / DSM 864 / NBRC 100397 / JF-1)).